The sequence spans 609 residues: Glutamine--fructose-6-phosphate aminotransferase [isomerizing] (609 aa).

Cys2 functions as the Nucleophile; for GATase activity in the catalytic mechanism. Residues 2 to 218 (CGIVGAIAQR…EGDIAEITRR (217 aa)) enclose the Glutamine amidotransferase type-2 domain. SIS domains lie at 286–426 (ADEL…LKGL) and 458–599 (LAED…VDQP). Lys604 acts as the For Fru-6P isomerization activity in catalysis.

In terms of assembly, homodimer.

Its subcellular location is the cytoplasm. The enzyme catalyses D-fructose 6-phosphate + L-glutamine = D-glucosamine 6-phosphate + L-glutamate. Functionally, catalyzes the first step in hexosamine metabolism, converting fructose-6P into glucosamine-6P using glutamine as a nitrogen source. The polypeptide is Glutamine--fructose-6-phosphate aminotransferase [isomerizing] (Salmonella paratyphi A (strain ATCC 9150 / SARB42)).